The primary structure comprises 119 residues: Large ribosomal subunit protein bL20c (119 aa).

Belongs to the bacterial ribosomal protein bL20 family.

The protein localises to the plastid. It localises to the chloroplast. Its function is as follows. Binds directly to 23S ribosomal RNA and is necessary for the in vitro assembly process of the 50S ribosomal subunit. It is not involved in the protein synthesizing functions of that subunit. The chain is Large ribosomal subunit protein bL20c from Brachypodium distachyon (Purple false brome).